Reading from the N-terminus, the 323-residue chain is uncharacterized protein (323 aa).

The Proton donor role is filled by Tyr59. 198–208 (SPLAQGLLGGK) contributes to the NADP(+) binding site.

The protein belongs to the aldo/keto reductase family. Aldo/keto reductase 2 subfamily.

This is an uncharacterized protein from Mycobacterium tuberculosis (strain CDC 1551 / Oshkosh).